Consider the following 418-residue polypeptide: Glutamyl-tRNA reductase (418 aa).

Substrate is bound by residues 49–52, serine 107, 112–114, and glutamine 118; these read TCNR and EPQ. Catalysis depends on cysteine 50, which acts as the Nucleophile. 187 to 192 is an NADP(+) binding site; the sequence is GAGETI.

This sequence belongs to the glutamyl-tRNA reductase family. Homodimer.

The enzyme catalyses (S)-4-amino-5-oxopentanoate + tRNA(Glu) + NADP(+) = L-glutamyl-tRNA(Glu) + NADPH + H(+). The protein operates within porphyrin-containing compound metabolism; protoporphyrin-IX biosynthesis; 5-aminolevulinate from L-glutamyl-tRNA(Glu): step 1/2. Its function is as follows. Catalyzes the NADPH-dependent reduction of glutamyl-tRNA(Glu) to glutamate 1-semialdehyde (GSA). In Pseudoalteromonas translucida (strain TAC 125), this protein is Glutamyl-tRNA reductase.